The primary structure comprises 289 residues: Zinc finger matrin-type protein 3 (289 aa).

2 Matrin-type zinc fingers span residues 70-100 and 147-177; these read LFCK…KLRN and DYCK…RLRL. 2 disordered regions span residues 180-202 and 265-289; these read AQSH…EGSE and ESKQ…GYVQ. The segment at 245–275 adopts a Matrin-type 3 zinc-finger fold; that stretch reads FYCSMCNVGAGEEVEFRQHLESKQHKSKVSE. Residues 265 to 282 are compositionally biased toward basic and acidic residues; that stretch reads ESKQHKSKVSEQRYRSEM.

As to quaternary structure, interacts with dsRNA. In terms of tissue distribution, highly expressed in brain, gut, lung, and testis.

It is found in the nucleus. It localises to the nucleolus. Functionally, acts as a bona fide target gene of p53/TP53. May play a role in the TP53-dependent growth regulatory pathway. May contribute to TP53-mediated apoptosis by regulation of TP53 expression and translocation to the nucleus and nucleolus. This Rattus norvegicus (Rat) protein is Zinc finger matrin-type protein 3.